The primary structure comprises 219 residues: Thiamine-phosphate synthase (219 aa).

4-amino-2-methyl-5-(diphosphooxymethyl)pyrimidine contacts are provided by residues 44-48 and Asn79; that span reads QFREK. Asp80 and Asp99 together coordinate Mg(2+). Residue Ser117 coordinates 4-amino-2-methyl-5-(diphosphooxymethyl)pyrimidine. Residue 143 to 145 participates in 2-[(2R,5Z)-2-carboxy-4-methylthiazol-5(2H)-ylidene]ethyl phosphate binding; the sequence is TST. Lys146 is a binding site for 4-amino-2-methyl-5-(diphosphooxymethyl)pyrimidine. Residues Gly175 and 195–196 contribute to the 2-[(2R,5Z)-2-carboxy-4-methylthiazol-5(2H)-ylidene]ethyl phosphate site; that span reads IS.

This sequence belongs to the thiamine-phosphate synthase family. The cofactor is Mg(2+).

It catalyses the reaction 2-[(2R,5Z)-2-carboxy-4-methylthiazol-5(2H)-ylidene]ethyl phosphate + 4-amino-2-methyl-5-(diphosphooxymethyl)pyrimidine + 2 H(+) = thiamine phosphate + CO2 + diphosphate. The catalysed reaction is 2-(2-carboxy-4-methylthiazol-5-yl)ethyl phosphate + 4-amino-2-methyl-5-(diphosphooxymethyl)pyrimidine + 2 H(+) = thiamine phosphate + CO2 + diphosphate. The enzyme catalyses 4-methyl-5-(2-phosphooxyethyl)-thiazole + 4-amino-2-methyl-5-(diphosphooxymethyl)pyrimidine + H(+) = thiamine phosphate + diphosphate. The protein operates within cofactor biosynthesis; thiamine diphosphate biosynthesis; thiamine phosphate from 4-amino-2-methyl-5-diphosphomethylpyrimidine and 4-methyl-5-(2-phosphoethyl)-thiazole: step 1/1. In terms of biological role, condenses 4-methyl-5-(beta-hydroxyethyl)thiazole monophosphate (THZ-P) and 2-methyl-4-amino-5-hydroxymethyl pyrimidine pyrophosphate (HMP-PP) to form thiamine monophosphate (TMP). The sequence is that of Thiamine-phosphate synthase from Bacillus cereus (strain ZK / E33L).